The sequence spans 371 residues: MLNQHTLLISNLLPVGSNISTWWNFGSLLLTCLMLQILTGFFLAIHYTANINLAFSSVIHITRDVPYGWIMQNTHAIGASLFFICIYTHIARGLYYGSYLNKSVWLSGTTLLIILMATAFFGYVLPWGQMSFWAATVITNLLTAIPYLGTTVTTWLWGGFSINDPTLTRFFALHFILPFIIISMSSIHIILLHNEGSNNPLGTNSDIDKIPFHPYHLYKDMTMVSIMIMLLLMVMTFAPNLFNDPENFSKANPLVTPQHIKPEWYFLFAYGILRSIPNKLGGTLALFLSIIILTTTPFTHTSYIQSMAFRPLTQILFWTLIATFTTITWTATKPVETPFIYISQMTSIMYFSFFIMNPLLGWAENKIMMNM.

4 helical membrane passes run 25-45 (FGSL…FLAI), 69-90 (WIMQ…YTHI), 105-125 (WLSG…GYVL), and 170-190 (FFAL…IHII). Heme b-binding residues include histidine 75 and histidine 89. Heme b contacts are provided by histidine 174 and histidine 188. Residue histidine 193 coordinates a ubiquinone. 4 helical membrane-spanning segments follow: residues 218–238 (YKDM…MTFA), 280–300 (LGGT…PFTH), 312–332 (LTQI…WTAT), and 339–358 (FIYI…IMNP).

Belongs to the cytochrome b family. The cytochrome bc1 complex contains 3 respiratory subunits (MT-CYB, CYC1 and UQCRFS1), 2 core proteins (UQCRC1 and UQCRC2) and probably 6 low-molecular weight proteins. It depends on heme b as a cofactor.

It localises to the mitochondrion inner membrane. Component of the ubiquinol-cytochrome c reductase complex (complex III or cytochrome b-c1 complex) that is part of the mitochondrial respiratory chain. The b-c1 complex mediates electron transfer from ubiquinol to cytochrome c. Contributes to the generation of a proton gradient across the mitochondrial membrane that is then used for ATP synthesis. The polypeptide is Cytochrome b (MT-CYB) (Micruroides euryxanthus (Sonoran coral snake)).